Here is a 149-residue protein sequence, read N- to C-terminus: Globin (149 aa).

The region spanning valine 2–leucine 149 is the Globin domain. Histidine 100 lines the heme pocket.

It belongs to the globin family. Monomer.

Functionally, oxygen binding protein. This chain is Globin, found in Isoparorchis hypselobagri (Giant trematode).